Consider the following 244-residue polypeptide: Small ribosomal subunit protein uS2 (244 aa).

It belongs to the universal ribosomal protein uS2 family.

The protein is Small ribosomal subunit protein uS2 of Desulforudis audaxviator (strain MP104C).